The following is a 356-amino-acid chain: L-Lys-D/L-Arg epimerase (356 aa).

Substrate is bound by residues Thr-135 and 160 to 162 (KVK). Mg(2+) is bound by residues Asp-190, Glu-216, and Asp-241. Residues Lys-266, Asp-296, and 319–321 (DLD) contribute to the substrate site.

This sequence belongs to the mandelate racemase/muconate lactonizing enzyme family. It depends on Mg(2+) as a cofactor.

Functionally, catalyzes the epimerization of L-Lys-L-Arg to L-Lys-D-Arg. Can also catalyze the epimerization of other cationic dipeptides, such as L-Arg-L-Arg, L-Lys-L-Lys and L-Lys-L-His, but with lower efficiency (in vitro). In Methylococcus capsulatus (strain ATCC 33009 / NCIMB 11132 / Bath), this protein is L-Lys-D/L-Arg epimerase.